The primary structure comprises 123 residues: Small ribosomal subunit protein uS12 (123 aa).

The residue at position 89 (Asp89) is a 3-methylthioaspartic acid. The tract at residues 104-123 (TQGVKDRRQRRSKYGAKRPK) is disordered. The segment covering 110–123 (RRQRRSKYGAKRPK) has biased composition (basic residues).

It belongs to the universal ribosomal protein uS12 family. In terms of assembly, part of the 30S ribosomal subunit. Contacts proteins S8 and S17. May interact with IF1 in the 30S initiation complex.

In terms of biological role, with S4 and S5 plays an important role in translational accuracy. Interacts with and stabilizes bases of the 16S rRNA that are involved in tRNA selection in the A site and with the mRNA backbone. Located at the interface of the 30S and 50S subunits, it traverses the body of the 30S subunit contacting proteins on the other side and probably holding the rRNA structure together. The combined cluster of proteins S8, S12 and S17 appears to hold together the shoulder and platform of the 30S subunit. This Rhodospirillum rubrum (strain ATCC 11170 / ATH 1.1.1 / DSM 467 / LMG 4362 / NCIMB 8255 / S1) protein is Small ribosomal subunit protein uS12.